The following is a 487-amino-acid chain: 2-aminomuconic semialdehyde dehydrogenase (487 aa).

NAD(+) is bound at residue 231-236 (GSTATA). Catalysis depends on Glu253, which acts as the Proton acceptor. Residue Cys287 is the Nucleophile of the active site.

Belongs to the aldehyde dehydrogenase family.

The protein resides in the cytoplasm. It carries out the reaction 2-aminomuconate 6-semialdehyde + NAD(+) + H2O = (2Z,4E)-2-aminomuconate + NADH + 2 H(+). The protein operates within amino-acid degradation; L-kynurenine degradation. Its function is as follows. Catalyzes the NAD-dependent oxidation of 2-aminomuconic semialdehyde of the kynurenine metabolic pathway in L-tryptophan degradation. This is 2-aminomuconic semialdehyde dehydrogenase (aldh8a1) from Danio rerio (Zebrafish).